Here is a 72-residue protein sequence, read N- to C-terminus: Translation initiation factor IF-1 (72 aa).

The region spanning 1 to 72 (MAKEEAIEIE…TKGRITYRYK (72 aa)) is the S1-like domain.

The protein belongs to the IF-1 family. Component of the 30S ribosomal translation pre-initiation complex which assembles on the 30S ribosome in the order IF-2 and IF-3, IF-1 and N-formylmethionyl-tRNA(fMet); mRNA recruitment can occur at any time during PIC assembly.

Its subcellular location is the cytoplasm. In terms of biological role, one of the essential components for the initiation of protein synthesis. Stabilizes the binding of IF-2 and IF-3 on the 30S subunit to which N-formylmethionyl-tRNA(fMet) subsequently binds. Helps modulate mRNA selection, yielding the 30S pre-initiation complex (PIC). Upon addition of the 50S ribosomal subunit IF-1, IF-2 and IF-3 are released leaving the mature 70S translation initiation complex. This is Translation initiation factor IF-1 from Chlorobium phaeobacteroides (strain DSM 266 / SMG 266 / 2430).